A 60-amino-acid chain; its full sequence is Large ribosomal subunit protein uL30 (60 aa).

Belongs to the universal ribosomal protein uL30 family. In terms of assembly, part of the 50S ribosomal subunit.

This chain is Large ribosomal subunit protein uL30, found in Leuconostoc mesenteroides subsp. mesenteroides (strain ATCC 8293 / DSM 20343 / BCRC 11652 / CCM 1803 / JCM 6124 / NCDO 523 / NBRC 100496 / NCIMB 8023 / NCTC 12954 / NRRL B-1118 / 37Y).